We begin with the raw amino-acid sequence, 378 residues long: Myoglobin (378 aa).

Position 2 is a blocked amino end (Ala) (Ala-2). His-332 serves as a coordination point for heme.

It belongs to the indoleamine 2,3-dioxygenase family. As to quaternary structure, homodimer. It depends on heme as a cofactor.

Functionally, serves a reserve supply of oxygen and facilitates the movement of oxygen within muscles. This chain is Myoglobin, found in Haliotis diversicolor (Abalone).